Reading from the N-terminus, the 38-residue chain is Potassium channel toxin alpha-KTx 6.4 (38 aa).

4 cysteine pairs are disulfide-bonded: Cys6/Cys27, Cys12/Cys32, Cys16/Cys34, and Cys22/Cys37.

The protein belongs to the short scorpion toxin superfamily. Potassium channel inhibitor family. Alpha-KTx 06 subfamily. As to expression, expressed by the venom gland.

It localises to the secreted. In terms of biological role, potently, completely and reversibly blocks voltage-gated potassium channel Kv1.2/KCNA2 and Shaker B (Sh). Also blocks small conductance (SK) calcium-activated potassium channel (KCNN). This chain is Potassium channel toxin alpha-KTx 6.4, found in Pandinus imperator (Emperor scorpion).